The sequence spans 835 residues: Protein translocase subunit SecA (835 aa).

ATP is bound by residues Gln-85, Gly-103–Thr-107, and Asp-492. The Zn(2+) site is built by Cys-819, Cys-821, Cys-830, and Cys-831.

Belongs to the SecA family. Monomer and homodimer. Part of the essential Sec protein translocation apparatus which comprises SecA, SecYEG and auxiliary proteins SecDF. Other proteins may also be involved. Requires Zn(2+) as cofactor.

The protein resides in the cell membrane. It localises to the cytoplasm. The catalysed reaction is ATP + H2O + cellular proteinSide 1 = ADP + phosphate + cellular proteinSide 2.. Part of the Sec protein translocase complex. Interacts with the SecYEG preprotein conducting channel. Has a central role in coupling the hydrolysis of ATP to the transfer of proteins into and across the cell membrane, serving as an ATP-driven molecular motor driving the stepwise translocation of polypeptide chains across the membrane. The protein is Protein translocase subunit SecA of Clostridium botulinum (strain Loch Maree / Type A3).